A 430-amino-acid polypeptide reads, in one-letter code: Probable sugar isomerase mlr5709 (430 aa).

Residues His257, Asp289, and Asp291 each contribute to the Mn(2+) site.

It belongs to the rhamnose isomerase family. The cofactor is Mn(2+).

This is Probable sugar isomerase mlr5709 from Mesorhizobium japonicum (strain LMG 29417 / CECT 9101 / MAFF 303099) (Mesorhizobium loti (strain MAFF 303099)).